Consider the following 382-residue polypeptide: Anhydro-N-acetylmuramic acid kinase (382 aa).

Position 22-29 (22-29 (GTSMDGVD)) interacts with ATP.

Belongs to the anhydro-N-acetylmuramic acid kinase family.

It carries out the reaction 1,6-anhydro-N-acetyl-beta-muramate + ATP + H2O = N-acetyl-D-muramate 6-phosphate + ADP + H(+). The protein operates within amino-sugar metabolism; 1,6-anhydro-N-acetylmuramate degradation. Its pathway is cell wall biogenesis; peptidoglycan recycling. Its function is as follows. Catalyzes the specific phosphorylation of 1,6-anhydro-N-acetylmuramic acid (anhMurNAc) with the simultaneous cleavage of the 1,6-anhydro ring, generating MurNAc-6-P. Is required for the utilization of anhMurNAc either imported from the medium or derived from its own cell wall murein, and thus plays a role in cell wall recycling. This Burkholderia ambifaria (strain ATCC BAA-244 / DSM 16087 / CCUG 44356 / LMG 19182 / AMMD) (Burkholderia cepacia (strain AMMD)) protein is Anhydro-N-acetylmuramic acid kinase.